The chain runs to 214 residues: Urease accessory protein UreG (214 aa).

GTP is bound at residue 23–30; that stretch reads GPVGSGKT.

This sequence belongs to the SIMIBI class G3E GTPase family. UreG subfamily. Homodimer. UreD, UreF and UreG form a complex that acts as a GTP-hydrolysis-dependent molecular chaperone, activating the urease apoprotein by helping to assemble the nickel containing metallocenter of UreC. The UreE protein probably delivers the nickel.

It is found in the cytoplasm. Its function is as follows. Facilitates the functional incorporation of the urease nickel metallocenter. This process requires GTP hydrolysis, probably effectuated by UreG. In Bordetella pertussis (strain Tohama I / ATCC BAA-589 / NCTC 13251), this protein is Urease accessory protein UreG.